Here is a 252-residue protein sequence, read N- to C-terminus: Cyclic di-GMP binding protein VCA0042 (252 aa).

Positions 1-11 (MNSRPAEKIDN) are enriched in basic and acidic residues. The segment at 1-24 (MNSRPAEKIDNNDGQTETPRSKTV) is disordered. A compositionally biased stretch (polar residues) spans 12-24 (NDGQTETPRSKTV). The region spanning 134-233 (QLRKEPRFEL…EEGRNNAKNL (100 aa)) is the PilZ domain.

This sequence belongs to the YcgR family. As to quaternary structure, dimer.

The protein localises to the bacterial flagellum basal body. May act as a flagellar brake, regulating swimming and swarming in a bis-(3'-5') cyclic diguanylic acid (c-di-GMP)-dependent manner. Increasing levels of c-di-GMP lead to decreased motility (Potential). Binds bis-(3'-5') cyclic diguanylic acid (c-di-GMP) with a dissociation constant of 170 nM in the presence of 10 mM KCl and with 100 nM in its absence. Binds 1 to 2 c-di-GMP per subunit. Only 1 c-di-GMP is seen in the wild-type crystal, while 2 are seen in the mutant. Depending on the concentration of K(+) stoichiometries of 1:1, 1.43:1 and 2:1 are determined by isothermal titration calorimetry. The protein is Cyclic di-GMP binding protein VCA0042 of Vibrio cholerae serotype O1 (strain ATCC 39315 / El Tor Inaba N16961).